Reading from the N-terminus, the 249-residue chain is MSSGQQVWHTAVPPPRRSSSIASMPRSPSSAGSPRSPGTPGSERVASPLECSICFSGYDNIFKTPKELSCTHVFCLECLARLAAAQPVGRPGGEAVPCPFCRQPTAVPPAGAPALCTSRQLQARMPAHLRREEPVWLEGTKLCCQPLPTTPGREPGFVCVDVGLSKPAEPPAPARDPAPRRGRLARCWARCRDWRRMALVSALLLMLFCVALWPVQCALKTGNLRCLPLPPRPPATSTAASPLGPLTDN.

The disordered stretch occupies residues 1–44 (MSSGQQVWHTAVPPPRRSSSIASMPRSPSSAGSPRSPGTPGSER). The span at 17–44 (RSSSIASMPRSPSSAGSPRSPGTPGSER) shows a compositional bias: low complexity. The RING-type zinc-finger motif lies at 51–102 (CSICFSGYDNIFKTPKELSCTHVFCLECLARLAAAQPVGRPGGEAVPCPFCR). Residues 199 to 219 (LVSALLLMLFCVALWPVQCAL) traverse the membrane as a helical segment. A disordered region spans residues 230–249 (PPRPPATSTAASPLGPLTDN). Residues 235-249 (ATSTAASPLGPLTDN) are compositionally biased toward low complexity.

The protein resides in the membrane. The protein is RING finger protein 223 (RNF223) of Homo sapiens (Human).